Consider the following 39-residue polypeptide: Phosphate starvation-inducible protein 1 (39 aa).

It is found in the cell outer membrane. The protein is Phosphate starvation-inducible protein 1 of Pseudomonas fluorescens.